The primary structure comprises 540 residues: Acrosin-binding protein (540 aa).

The signal sequence occupies residues 1-24; it reads MKLAASFLLMLLEVLLLPETPLSA. The segment at 25 to 104 is pro-ACR binding; it reads EEALASTPGS…ASWFESFCQF (80 aa). Residues 25-272 constitute a propeptide, removed in mature form; it reads EEALASTPGS…NPSFFTPRVR (248 aa). The interval 181 to 266 is disordered; sequence SLSLGGKEQQ…SKSLSSNPSF (86 aa). A compositionally biased stretch (basic and acidic residues) spans 195–213; that stretch reads LGLEQQHKQEQIQEHKLEE. Over residues 214 to 241 the composition is skewed to acidic residues; the sequence is AQEQEEQEEEEEEEEAKQEEGQGTEEGL. Residues 256 to 266 show a composition bias toward polar residues; the sequence is QSKSLSSNPSF. The segment at 316-424 is pro-ACR binding; sequence LPHTETLMVL…NQAKIPEKGR (109 aa).

In terms of assembly, binds pro-ACR. Does not bind the mature form of ACR. Binds pro-ACR. Does not bind mature form of ACR. Post-translationally, the N-terminus is blocked. Phosphorylated on Tyr residues in capacitated sperm. In terms of processing, synthesized as a 60-kDa precursor, the 32-kDa mature form is post-translationally produced by the removal of the N-terminal half of the precursor during sperm maturation in the testis and/or epididymis.

It is found in the cytoplasmic vesicle. The protein resides in the secretory vesicle. The protein localises to the acrosome. Acrosomal protein that maintains proacrosin (pro-ACR) as an enzymatically inactive zymogen in the acrosome. Involved also in the acrosome formation. Functionally, maintains pro-ACR as an enzymatically inactive zymogen in the acrosome until acrosomal exocytosis. Partially also contributes to the assembly of acrosomal proteins to form an acrosomal granule. In terms of biological role, rodent specific isoform that participates in the formation of the acrosomal granule into the center of the acrosomal vesicle during early spermiogenesis. In the fertilization process promotes ACR release from the acrosome during acrosomal exocytosis. The polypeptide is Acrosin-binding protein (Rattus norvegicus (Rat)).